We begin with the raw amino-acid sequence, 107 residues long: Ribosome-associated factor Y (107 aa).

The disordered stretch occupies residues 85–107; sequence LNKLQHKSESRRADERLKDSFEN.

As to quaternary structure, associates mainly with 70S ribosomes.

Functionally, during stationary phase, prevents 70S dimer formation, probably in order to regulate translation efficiency during transition between the exponential and the stationary phases. In addition, during environmental stress such as cold shock or excessive cell density at stationary phase, stabilizes the 70S ribosome against dissociation, inhibits translation initiation and increase translation accuracy. When normal growth conditions are restored, is quickly released from the ribosome. The sequence is that of Ribosome-associated factor Y from Haemophilus influenzae (strain ATCC 51907 / DSM 11121 / KW20 / Rd).